We begin with the raw amino-acid sequence, 97 residues long: MLNLNLANLQFMAHKKGGGSTSNGRDSQAKRLGAKAADGQTVSGGSILYRQRGTKIYPGANVGRGGDDTLYAKVEGVVRFERKGRDKKQVSVYPIAK.

The propeptide occupies 1–12 (MLNLNLANLQFM). The segment at 15 to 37 (KKGGGSTSNGRDSQAKRLGAKAA) is disordered.

It belongs to the bacterial ribosomal protein bL27 family. Post-translationally, the N-terminus is cleaved by ribosomal processing cysteine protease Prp.

This Streptococcus suis (strain 98HAH33) protein is Large ribosomal subunit protein bL27.